Reading from the N-terminus, the 273-residue chain is Probable ribosomal RNA small subunit methyltransferase A (273 aa).

Residues Asn-26, Leu-28, Gly-53, Glu-74, Asp-98, and Asn-113 each contribute to the S-adenosyl-L-methionine site.

The protein belongs to the class I-like SAM-binding methyltransferase superfamily. rRNA adenine N(6)-methyltransferase family. RsmA subfamily.

It is found in the cytoplasm. In terms of biological role, specifically dimethylates two adjacent adenosines in the loop of a conserved hairpin near the 3'-end of 16S rRNA in the 30S particle. May play a critical role in biogenesis of 30S subunits. This chain is Probable ribosomal RNA small subunit methyltransferase A, found in Methanothermobacter thermautotrophicus (strain ATCC 29096 / DSM 1053 / JCM 10044 / NBRC 100330 / Delta H) (Methanobacterium thermoautotrophicum).